We begin with the raw amino-acid sequence, 329 residues long: Fructose-1,6-bisphosphatase class 1 (329 aa).

The Mg(2+) site is built by glutamate 84, aspartate 103, leucine 105, and aspartate 106. Substrate-binding positions include 106–109 (DGSS), asparagine 196, and lysine 262. Glutamate 268 serves as a coordination point for Mg(2+).

The protein belongs to the FBPase class 1 family. As to quaternary structure, homotetramer. Mg(2+) is required as a cofactor.

The protein resides in the cytoplasm. The enzyme catalyses beta-D-fructose 1,6-bisphosphate + H2O = beta-D-fructose 6-phosphate + phosphate. It participates in carbohydrate biosynthesis; gluconeogenesis. This is Fructose-1,6-bisphosphatase class 1 from Shewanella loihica (strain ATCC BAA-1088 / PV-4).